A 186-amino-acid chain; its full sequence is Biphenyl dioxygenase subunit beta (186 aa).

It belongs to the bacterial ring-hydroxylating dioxygenase beta subunit family. As to quaternary structure, heterohexamer consisting of 3 BphA subunits and 3 BphE subunits. A ferredoxin (BphF) and a ferredoxin reductase (BphG) must be present to obtain activity.

The enzyme catalyses biphenyl + NADH + O2 + H(+) = (2R,3S)-3-phenylcyclohexa-3,5-diene-1,2-diol + NAD(+). The protein operates within xenobiotic degradation; biphenyl degradation; 2-hydroxy-2,4-pentadienoate and benzoate from biphenyl: step 1/4. Functionally, the beta subunit may be responsible for the substrate specificity of the enzyme. The chain is Biphenyl dioxygenase subunit beta (bphE) from Comamonas testosteroni (Pseudomonas testosteroni).